The following is a 453-amino-acid chain: Calcium-binding tyrosine phosphorylation-regulated protein (453 aa).

The RIIa domain occupies 12–49; that stretch reads YGLKTLLEGVSRAILKTNPTNITQFAAVYFKELIVFRE. 3 disordered regions span residues 86–165, 246–278, and 406–453; these read PIKP…PVSA, PVSE…QVTS, and IINP…PEQV. Residues 143-154 show a composition bias toward low complexity; it reads DKPTTPKTDYTP.

In terms of assembly, interacts with FSCB. In terms of processing, phosphorylated on tyrosine residues during in vitro capacitation. Dephosphorylation affects its ability to bind calcium. In terms of tissue distribution, expressed in spermatozoa.

The protein localises to the cytoplasm. It localises to the cytoskeleton. It is found in the cell projection. Its subcellular location is the cilium. The protein resides in the flagellum. In terms of biological role, may function as a regulator of both motility- and head-associated functions such as capacitation and the acrosome reaction. May bind calcium in vitro. The chain is Calcium-binding tyrosine phosphorylation-regulated protein (Cabyr) from Mus musculus (Mouse).